Reading from the N-terminus, the 342-residue chain is Dihydroorotase (342 aa).

Zn(2+)-binding residues include His-13 and His-15. Residues 15–17 (HLR) and Asn-41 each bind substrate. Residues Lys-99, His-136, and His-174 each contribute to the Zn(2+) site. At Lys-99 the chain carries N6-carboxylysine. His-136 is a binding site for substrate. A substrate-binding site is contributed by Leu-218. Asp-246 contributes to the Zn(2+) binding site. Asp-246 is a catalytic residue. Residues His-250 and Ala-262 each contribute to the substrate site.

It belongs to the metallo-dependent hydrolases superfamily. DHOase family. Class II DHOase subfamily. In terms of assembly, homodimer. Requires Zn(2+) as cofactor.

The enzyme catalyses (S)-dihydroorotate + H2O = N-carbamoyl-L-aspartate + H(+). The protein operates within pyrimidine metabolism; UMP biosynthesis via de novo pathway; (S)-dihydroorotate from bicarbonate: step 3/3. Its function is as follows. Catalyzes the reversible cyclization of carbamoyl aspartate to dihydroorotate. The chain is Dihydroorotase from Synechocystis sp. (strain ATCC 27184 / PCC 6803 / Kazusa).